The following is a 323-amino-acid chain: tRNA U34 carboxymethyltransferase (323 aa).

Residues Lys91, Trp105, Lys110, Gly130, 152–154, 181–182, Met196, Tyr200, and Arg315 contribute to the carboxy-S-adenosyl-L-methionine site; these read DPS and IE.

The protein belongs to the class I-like SAM-binding methyltransferase superfamily. CmoB family. Homotetramer.

It catalyses the reaction carboxy-S-adenosyl-L-methionine + 5-hydroxyuridine(34) in tRNA = 5-carboxymethoxyuridine(34) in tRNA + S-adenosyl-L-homocysteine + H(+). Its function is as follows. Catalyzes carboxymethyl transfer from carboxy-S-adenosyl-L-methionine (Cx-SAM) to 5-hydroxyuridine (ho5U) to form 5-carboxymethoxyuridine (cmo5U) at position 34 in tRNAs. This chain is tRNA U34 carboxymethyltransferase, found in Vibrio cholerae serotype O1 (strain ATCC 39541 / Classical Ogawa 395 / O395).